We begin with the raw amino-acid sequence, 430 residues long: N-acylneuraminate cytidylyltransferase A (430 aa).

The interval 1-29 (MDAVNENGKRAMKDDSHGNSTSPKRRKSR) is disordered. The segment covering 7 to 17 (NGKRAMKDDSH) has biased composition (basic and acidic residues). Residues 9-27 (KRAMKDDSHGNSTSPKRRK) carry the Bipartite nuclear localization signal motif. 6 residues coordinate substrate: Arg-38, Asn-48, Arg-97, Ser-106, Ser-108, and Gln-129. Residue Arg-187 is part of the active site.

It belongs to the CMP-NeuNAc synthase family. As to quaternary structure, homotetramer.

Its subcellular location is the nucleus. It catalyses the reaction an N-acylneuraminate + CTP = a CMP-N-acyl-beta-neuraminate + diphosphate. It functions in the pathway amino-sugar metabolism; N-acetylneuraminate metabolism. Its function is as follows. Catalyzes the activation of N-acetylneuraminic acid (NeuNAc) to cytidine 5'-monophosphate N-acetylneuraminic acid (CMP-NeuNAc), a substrate required for the addition of sialic acid. Also has activity towards N-glycolylneuraminic acid (Neu5Gc). Has weak activity towards 2-keto-3-deoxy-D-glycero-D-galacto-nononic acid (KDN). This chain is N-acylneuraminate cytidylyltransferase A, found in Danio rerio (Zebrafish).